Here is a 453-residue protein sequence, read N- to C-terminus: Serine--tRNA ligase (453 aa).

249-251 is a binding site for L-serine; that stretch reads TSE. ATP-binding positions include 280-282 and valine 296; that span reads RKE. L-serine is bound at residue glutamate 303. Residue 367–370 participates in ATP binding; sequence EMVS. Threonine 404 contributes to the L-serine binding site.

The protein belongs to the class-II aminoacyl-tRNA synthetase family. Type-1 seryl-tRNA synthetase subfamily. As to quaternary structure, homodimer. The tRNA molecule binds across the dimer.

The protein localises to the cytoplasm. It catalyses the reaction tRNA(Ser) + L-serine + ATP = L-seryl-tRNA(Ser) + AMP + diphosphate + H(+). The catalysed reaction is tRNA(Sec) + L-serine + ATP = L-seryl-tRNA(Sec) + AMP + diphosphate + H(+). It functions in the pathway aminoacyl-tRNA biosynthesis; selenocysteinyl-tRNA(Sec) biosynthesis; L-seryl-tRNA(Sec) from L-serine and tRNA(Sec): step 1/1. Functionally, catalyzes the attachment of serine to tRNA(Ser). Is also able to aminoacylate tRNA(Sec) with serine, to form the misacylated tRNA L-seryl-tRNA(Sec), which will be further converted into selenocysteinyl-tRNA(Sec). The polypeptide is Serine--tRNA ligase (Archaeoglobus fulgidus (strain ATCC 49558 / DSM 4304 / JCM 9628 / NBRC 100126 / VC-16)).